The primary structure comprises 184 residues: Cytochrome c homolog (184 aa).

The Cytoplasmic portion of the chain corresponds to 1–10; the sequence is MDSFELNKIL. The helical; Signal-anchor transmembrane segment at 11 to 31 threads the bilayer; sequence GAVLGTCLILLVTSFTANALF. Residues 32 to 184 lie on the Periplasmic side of the membrane; that stretch reads SPKMPEKPGF…HPKPLPTASK (153 aa). The heme c site is built by Cys84, Cys87, His88, and Met151.

This sequence belongs to the cytochrome c family. In terms of processing, binds 1 heme c group covalently per subunit.

The protein resides in the cell membrane. In terms of biological role, may be involved in electron transfer from bc1 complex to aa3. This Bradyrhizobium diazoefficiens (strain JCM 10833 / BCRC 13528 / IAM 13628 / NBRC 14792 / USDA 110) protein is Cytochrome c homolog (cycM).